The sequence spans 235 residues: Coiled-coil domain-containing protein 71L (235 aa).

Basic residues predominate over residues 1-13; it reads MRRSMKRRRRRRP. A disordered region spans residues 1–30; it reads MRRSMKRRRRRRPVAPATAARGGDFRAEDG. A phosphoserine mark is found at Ser52 and Ser89. Residues 109 to 167 form a disordered region; it reads PDPPGPPTARGQARRPVPRAAARRRRRGARAAAARRRKPRPPPPPPPPPEESCPAKPVA. Positions 120–148 are enriched in basic residues; that stretch reads QARRPVPRAAARRRRRGARAAAARRRKPR. A compositionally biased stretch (pro residues) spans 149-159; it reads PPPPPPPPPEE. Phosphothreonine is present on Thr185. A Phosphoserine modification is found at Ser198.

This chain is Coiled-coil domain-containing protein 71L (CCDC71L), found in Homo sapiens (Human).